The sequence spans 307 residues: Ribosomal RNA small subunit methyltransferase H (307 aa).

S-adenosyl-L-methionine is bound by residues 32–34 (GGH), Asp52, Phe78, Asp99, and Gln106.

Belongs to the methyltransferase superfamily. RsmH family.

It localises to the cytoplasm. It catalyses the reaction cytidine(1402) in 16S rRNA + S-adenosyl-L-methionine = N(4)-methylcytidine(1402) in 16S rRNA + S-adenosyl-L-homocysteine + H(+). Specifically methylates the N4 position of cytidine in position 1402 (C1402) of 16S rRNA. The chain is Ribosomal RNA small subunit methyltransferase H from Acinetobacter baumannii (strain SDF).